A 475-amino-acid polypeptide reads, in one-letter code: Ataxin-10 (475 aa).

Arg-10 bears the Omega-N-methylarginine mark. A phosphoserine mark is found at Ser-12 and Ser-77. Residue Thr-82 is modified to Phosphothreonine. Phosphoserine is present on Ser-430.

It belongs to the ataxin-10 family. Homooligomer. Interacts with GNB2. Interacts with IQCB1. Interacts with OGT. Post-translationally, polyubiquitinated. In terms of processing, phosphorylation at Ser-12 by AURKB promotes the association of ATXN10 with PLK1. Phosphorylation at Ser-77 and Thr-82 by PLK1 may play a role in the regulation of cytokinesis and may stimulate the proteasome-mediated degradation of ATXN10. Ubiquitous distribution. Markedly increased expression in testis, adrenals, and brain.

The protein localises to the cytoplasm. It localises to the perinuclear region. It is found in the midbody. Its subcellular location is the cytoskeleton. The protein resides in the cilium basal body. The protein localises to the microtubule organizing center. It localises to the centrosome. It is found in the centriole. Its function is as follows. May play a role in the regulation of cytokinesis. May play a role in signaling by stimulating protein glycosylation. Induces neuritogenesis by activating the Ras-MAP kinase pathway and is necessary for the survival of cerebellar neurons. Does not appear to play a major role in ciliogenesis. This is Ataxin-10 (Atxn10) from Rattus norvegicus (Rat).